We begin with the raw amino-acid sequence, 318 residues long: Pheromone-regulated membrane protein 5 (318 aa).

A helical transmembrane segment spans residues 78–98; sequence FIXVGGIAGVIFLAILLWWVI. S129 is modified (phosphoserine). Residues 238–247 show a composition bias toward low complexity; sequence TISSSSASSL. The disordered stretch occupies residues 238 to 318; sequence TISSSSASSL…HMLEGKEQDE (81 aa). The segment covering 250–261 has biased composition (basic and acidic residues); the sequence is GNEKEVGEDIRK. Over residues 276–285 the composition is skewed to polar residues; the sequence is SPESDGSVNR. A phosphoserine mark is found at S279, S282, and S288. Residues 309-318 show a composition bias toward basic and acidic residues; sequence HMLEGKEQDE. K314 is covalently cross-linked (Glycyl lysine isopeptide (Lys-Gly) (interchain with G-Cter in ubiquitin)).

The protein belongs to the PRM5 family.

The protein resides in the membrane. The protein is Pheromone-regulated membrane protein 5 (PRM5) of Saccharomyces cerevisiae (strain FostersO) (Baker's yeast).